We begin with the raw amino-acid sequence, 555 residues long: uncharacterized protein (555 aa).

An N-terminal signal peptide occupies residues 1–28; it reads MRSGLFGVLRWTAVGLVATLVASLALTA. Cys29 carries N-palmitoyl cysteine lipidation. Residue Cys29 is the site of S-diacylglycerol cysteine attachment.

This sequence to M.tuberculosis Rv2585c and M.bovis Mb2616c.

The protein localises to the cell membrane. This is an uncharacterized protein from Mycobacterium leprae (strain TN).